The primary structure comprises 600 residues: ATP-dependent lipid A-core flippase (600 aa).

6 helical membrane-spanning segments follow: residues 28-48 (TLSI…IAFI), 80-100 (VMLM…VANF), 159-179 (ALIS…LMFF), 182-202 (WKLS…ISIV), 267-287 (VSQP…LYAA), and 295-315 (ELTA…LQPI). Residues 29–327 (LSILGLIVYG…LTRVNAEFQR (299 aa)) form the ABC transmembrane type-1 domain. Residues 359-596 (LRFDNVSFSY…KGAYAGLYQM (238 aa)) enclose the ABC transporter domain. Residue 393 to 400 (GRSGSGKS) participates in ATP binding.

This sequence belongs to the ABC transporter superfamily. Lipid exporter (TC 3.A.1.106) family. Homodimer.

The protein localises to the cell inner membrane. It catalyses the reaction ATP + H2O + lipid A-core oligosaccharideSide 1 = ADP + phosphate + lipid A-core oligosaccharideSide 2.. Involved in lipopolysaccharide (LPS) biosynthesis. Translocates lipid A-core from the inner to the outer leaflet of the inner membrane. Transmembrane domains (TMD) form a pore in the inner membrane and the ATP-binding domain (NBD) is responsible for energy generation. This is ATP-dependent lipid A-core flippase from Shewanella denitrificans (strain OS217 / ATCC BAA-1090 / DSM 15013).